A 115-amino-acid polypeptide reads, in one-letter code: NAD(P)H-quinone oxidoreductase subunit M (115 aa).

Belongs to the complex I NdhM subunit family. NDH-1 can be composed of about 15 different subunits; different subcomplexes with different compositions have been identified which probably have different functions.

It localises to the cellular thylakoid membrane. It carries out the reaction a plastoquinone + NADH + (n+1) H(+)(in) = a plastoquinol + NAD(+) + n H(+)(out). The catalysed reaction is a plastoquinone + NADPH + (n+1) H(+)(in) = a plastoquinol + NADP(+) + n H(+)(out). NDH-1 shuttles electrons from an unknown electron donor, via FMN and iron-sulfur (Fe-S) centers, to quinones in the respiratory and/or the photosynthetic chain. The immediate electron acceptor for the enzyme in this species is believed to be plastoquinone. Couples the redox reaction to proton translocation, and thus conserves the redox energy in a proton gradient. Cyanobacterial NDH-1 also plays a role in inorganic carbon-concentration. The protein is NAD(P)H-quinone oxidoreductase subunit M of Synechococcus sp. (strain WH7803).